The primary structure comprises 1013 residues: Ephrin type-B receptor 6 (1013 aa).

The first 31 residues, 1–31 (MASENTAGSGSRVAGMVYSLWLLVLGPSVLA), serve as a signal peptide directing secretion. Over 32–590 (LEEVLLDTTG…LPEKLSLVIG (559 aa)) the chain is Extracellular. One can recognise an Eph LBD domain in the interval 33–231 (EEVLLDTTGE…FSYTCPSVLR (199 aa)). 2 Fibronectin type-III domains span residues 363-478 (PPSA…TSHE) and 479-574 (VPSA…TLPQ). N-linked (GlcNAc...) asparagine glycosylation occurs at asparagine 472. The helical transmembrane segment at 591-611 (SILGALAFLLLAAITVLAVIF) threads the bilayer. The Cytoplasmic segment spans residues 612-1013 (QRKRRGTGYT…HLRQPGSVEV (402 aa)). Positions 662 to 911 (IKIEEVIGAG…QLVAAFDKMI (250 aa)) constitute a Protein kinase domain. Residue 668-676 (IGAGSFGEV) participates in ATP binding. Residues 940-1004 (PCLDSPQAWL…LHNIQLLQQH (65 aa)) enclose the SAM domain. A PDZ-binding motif is present at residues 1011–1013 (VEV).

It belongs to the protein kinase superfamily. Tyr protein kinase family. Ephrin receptor subfamily. As to quaternary structure, interacts with CBL and EPHB1. Interacts with FYN; this interaction takes place in a ligand-independent manner. Post-translationally, ligand-binding increases phosphorylation on tyrosine residues. Phosphorylation on tyrosine residues is mediated by transphosphorylation by the catalytically active EPHB1 in a ligand-independent manner. Tyrosine phosphorylation of the receptor may act as a switch on the functional transition from cell adhesion/attraction to de-adhesion/repulsion.

It is found in the membrane. Kinase-defective receptor for members of the ephrin-B family. Binds to ephrin-B1 and ephrin-B2. Modulates cell adhesion and migration by exerting both positive and negative effects upon stimulation with ephrin-B2. Inhibits JNK activation, T-cell receptor-induced IL-2 secretion and CD25 expression upon stimulation with ephrin-B2. This Rattus norvegicus (Rat) protein is Ephrin type-B receptor 6 (Ephb6).